A 137-amino-acid chain; its full sequence is Ribosome-binding factor A (137 aa).

The disordered stretch occupies residues 112 to 137; that stretch reads KKDEVKEDESHEDESTDHTEETNEEP. The segment covering 127–137 has biased composition (basic and acidic residues); the sequence is TDHTEETNEEP.

It belongs to the RbfA family. Monomer. Binds 30S ribosomal subunits, but not 50S ribosomal subunits or 70S ribosomes.

Its subcellular location is the cytoplasm. One of several proteins that assist in the late maturation steps of the functional core of the 30S ribosomal subunit. Associates with free 30S ribosomal subunits (but not with 30S subunits that are part of 70S ribosomes or polysomes). Required for efficient processing of 16S rRNA. May interact with the 5'-terminal helix region of 16S rRNA. The polypeptide is Ribosome-binding factor A (Coprothermobacter proteolyticus (strain ATCC 35245 / DSM 5265 / OCM 4 / BT)).